The following is a 271-amino-acid chain: Cartilage-associated protein (271 aa).

A signal peptide spans 1–15 (MWRTLLAALLATAGA). An N-linked (GlcNAc...) asparagine glycan is attached at asparagine 76.

The protein belongs to the leprecan family. In terms of tissue distribution, found in articular chondrocytes. Expressed in a variety of tissues.

It localises to the secreted. Its subcellular location is the extracellular space. It is found in the extracellular matrix. Functionally, necessary for efficient 3-hydroxylation of fibrillar collagen prolyl residues. The chain is Cartilage-associated protein (CRTAP) from Gallus gallus (Chicken).